A 261-amino-acid chain; its full sequence is Leucine-rich repeat-containing protein 61 (261 aa).

LRR repeat units follow at residues 54–75 (GLEW…ASLR), 76–97 (QLAV…AACE), and 98–119 (NLQC…QCLA). In terms of domain architecture, LRRCT spans 138–183 (NPLCASPCYWASVRELLPGLKVLDGERVSGRGSDFYQLCRDLDSSL).

This chain is Leucine-rich repeat-containing protein 61 (LRRC61), found in Bos taurus (Bovine).